Consider the following 276-residue polypeptide: NAD-capped RNA hydrolase NudC (276 aa).

Arginine 82 contributes to the substrate binding site. Residues cysteine 112 and cysteine 115 each contribute to the Zn(2+) site. Residue glutamate 125 participates in substrate binding. Residues cysteine 130 and cysteine 133 each contribute to the Zn(2+) site. A substrate-binding site is contributed by tyrosine 138. The Nudix hydrolase domain occupies 139–262 (PRISPSMIVL…SIARYLIDLY (124 aa)). A divalent metal cation contacts are provided by alanine 172, glutamate 188, and glutamate 192. The Nudix box motif lies at 173–194 (GFAEPGESAEDCLVREVREEVA). 206-213 (QCWPFPHS) serves as a coordination point for substrate. An a divalent metal cation-binding site is contributed by glutamate 233. Position 255 (alanine 255) interacts with substrate.

The protein belongs to the Nudix hydrolase family. NudC subfamily. In terms of assembly, homodimer. Mg(2+) is required as a cofactor. Requires Mn(2+) as cofactor. The cofactor is Zn(2+).

It catalyses the reaction a 5'-end NAD(+)-phospho-ribonucleoside in mRNA + H2O = a 5'-end phospho-adenosine-phospho-ribonucleoside in mRNA + beta-nicotinamide D-ribonucleotide + 2 H(+). The enzyme catalyses NAD(+) + H2O = beta-nicotinamide D-ribonucleotide + AMP + 2 H(+). The catalysed reaction is NADH + H2O = reduced beta-nicotinamide D-ribonucleotide + AMP + 2 H(+). MRNA decapping enzyme that specifically removes the nicotinamide adenine dinucleotide (NAD) cap from a subset of mRNAs by hydrolyzing the diphosphate linkage to produce nicotinamide mononucleotide (NMN) and 5' monophosphate mRNA. The NAD-cap is present at the 5'-end of some mRNAs and stabilizes RNA against 5'-processing. Has preference for mRNAs with a 5'-end purine. Catalyzes the hydrolysis of a broad range of dinucleotide pyrophosphates. The protein is NAD-capped RNA hydrolase NudC of Pseudomonas putida (strain W619).